Consider the following 282-residue polypeptide: D-alanine aminotransferase (282 aa).

Residue Tyr32 participates in substrate binding. Residue Arg51 coordinates pyridoxal 5'-phosphate. Positions 99 and 101 each coordinate substrate. Residue Lys146 is the Proton acceptor of the active site. An N6-(pyridoxal phosphate)lysine modification is found at Lys146. Glu178 serves as a coordination point for pyridoxal 5'-phosphate.

It belongs to the class-IV pyridoxal-phosphate-dependent aminotransferase family. Homodimer. It depends on pyridoxal 5'-phosphate as a cofactor.

The enzyme catalyses D-alanine + 2-oxoglutarate = D-glutamate + pyruvate. Its function is as follows. Acts on the D-isomers of alanine, leucine, aspartate, glutamate, aminobutyrate, norvaline and asparagine. The enzyme transfers an amino group from a substrate D-amino acid to the pyridoxal phosphate cofactor to form pyridoxamine and an alpha-keto acid in the first half-reaction. The second half-reaction is the reverse of the first, transferring the amino group from the pyridoxamine to a second alpha-keto acid to form the product D-amino acid via a ping-pong mechanism. This is an important process in the formation of D-alanine and D-glutamate, which are essential bacterial cell wall components. The sequence is that of D-alanine aminotransferase (dat) from Staphylococcus aureus (strain N315).